The following is a 497-amino-acid chain: Galactose/methyl galactoside import ATP-binding protein MglA 1 (497 aa).

ABC transporter domains lie at 6–243 (LEMR…VGRD) and 256–494 (GKVR…VMSM). 38–45 (GENGAGKS) serves as a coordination point for ATP.

Belongs to the ABC transporter superfamily. Galactose/methyl galactoside importer (TC 3.A.1.2.3) family. The complex is composed of one ATP-binding protein (MglA), two transmembrane proteins (MglC) and a solute-binding protein (MglB).

The protein resides in the cell inner membrane. The catalysed reaction is D-galactose(out) + ATP + H2O = D-galactose(in) + ADP + phosphate + H(+). It carries out the reaction methyl beta-D-galactoside(out) + ATP + H2O = methyl beta-D-galactoside(in) + ADP + phosphate + H(+). In terms of biological role, part of the ABC transporter complex MglABC involved in galactose/methyl galactoside import. Responsible for energy coupling to the transport system. This Photobacterium profundum (strain SS9) protein is Galactose/methyl galactoside import ATP-binding protein MglA 1.